The chain runs to 227 residues: Uracil-DNA glycosylase (227 aa).

The Proton acceptor role is filled by D68.

This sequence belongs to the uracil-DNA glycosylase (UDG) superfamily. UNG family.

It is found in the cytoplasm. The enzyme catalyses Hydrolyzes single-stranded DNA or mismatched double-stranded DNA and polynucleotides, releasing free uracil.. Excises uracil residues from the DNA which can arise as a result of misincorporation of dUMP residues by DNA polymerase or due to deamination of cytosine. This is Uracil-DNA glycosylase from Mycolicibacterium smegmatis (strain ATCC 700084 / mc(2)155) (Mycobacterium smegmatis).